The primary structure comprises 147 residues: Globin (147 aa).

Residues 1-147 form the Globin domain; sequence GLSAEQKTAL…LLGVLIENHQ (147 aa). Heme b-binding residues include His-66 and His-98.

Belongs to the globin family. As to quaternary structure, homodimer.

In Tritia mutabilis (Sea snail), this protein is Globin.